The primary structure comprises 343 residues: Dihydroorotate dehydrogenase (quinone) (343 aa).

Residues 61–65 (AGLDK) and threonine 85 each bind FMN. A substrate-binding site is contributed by lysine 65. Residue 110–114 (NRMGF) coordinates substrate. The FMN site is built by asparagine 138 and asparagine 171. Position 171 (asparagine 171) interacts with substrate. The active-site Nucleophile is the serine 174. Asparagine 176 contributes to the substrate binding site. 2 residues coordinate FMN: lysine 216 and threonine 244. 245-246 (NT) lines the substrate pocket. Residues glycine 267, glycine 296, and 317 to 318 (YS) contribute to the FMN site.

The protein belongs to the dihydroorotate dehydrogenase family. Type 2 subfamily. As to quaternary structure, monomer. FMN serves as cofactor.

The protein resides in the cell membrane. The catalysed reaction is (S)-dihydroorotate + a quinone = orotate + a quinol. It participates in pyrimidine metabolism; UMP biosynthesis via de novo pathway; orotate from (S)-dihydroorotate (quinone route): step 1/1. Functionally, catalyzes the conversion of dihydroorotate to orotate with quinone as electron acceptor. The chain is Dihydroorotate dehydrogenase (quinone) from Stutzerimonas stutzeri (strain A1501) (Pseudomonas stutzeri).